Reading from the N-terminus, the 264-residue chain is MPNYALLVEYDGTHFNGWQKQKNLPTVQSSIESALGIILRRNPASRLSVAGRTDTGVHALGMVCNFKTEHPIPNFHKLLVSLNALTPTGVSVKNVVEVPSDFHARFSCTGREYIYKLYYSKYESSFVEGRAFWVKGHIDWERVKKQLQVLVGEKDFRSFTKAKSMAGKRAVREILAIQLENLSPEWYQIRIRANGFMHNMVRITVGTLLDIGKGRWESRSIDSILEEKNRTQAGVTLPPDGLYFVRAYYEDHPEIHELYKIPLP.

Residue D54 is the Nucleophile of the active site. Y113 serves as a coordination point for substrate.

The protein belongs to the tRNA pseudouridine synthase TruA family. As to quaternary structure, homodimer.

The enzyme catalyses uridine(38/39/40) in tRNA = pseudouridine(38/39/40) in tRNA. In terms of biological role, formation of pseudouridine at positions 38, 39 and 40 in the anticodon stem and loop of transfer RNAs. In Leptospira biflexa serovar Patoc (strain Patoc 1 / Ames), this protein is tRNA pseudouridine synthase A.